The following is a 526-amino-acid chain: Nucleobase-ascorbate transporter 4 (526 aa).

A run of 12 helical transmembrane segments spans residues 42–62 (IVML…MGGG), 69–89 (VINT…LFGS), 91–111 (LPVV…ITFS), 131–151 (IQGA…FGLW), 157–177 (FLSP…LLAF), 186–206 (IEIG…LPHL), 217–237 (FAVL…TAAG), 282–302 (AFAM…SFIA), 359–381 (RVVQ…GAVL), 388–410 (IFAA…LLQF), 420–440 (FILG…TEYL), and 457–477 (VIMQ…AFLL).

Belongs to the nucleobase:cation symporter-2 (NCS2) (TC 2.A.40) family. Highly expressed in the root central cylinder. Expressed in the filaments and stigmatic papillae of pollinated flowers and developing siliques.

The protein localises to the membrane. This is Nucleobase-ascorbate transporter 4 (NAT4) from Arabidopsis thaliana (Mouse-ear cress).